The sequence spans 499 residues: GTPase Der (499 aa).

2 consecutive EngA-type G domains span residues 3 to 166 (PVVA…LETL) and 213 to 386 (IKFA…QSAT). GTP is bound by residues 9–16 (GRPNVGKS), 56–60 (DTGGI), 118–121 (NKTD), 219–226 (GRPNVGKS), 266–270 (DTAGV), and 331–334 (NKWD). Positions 387–471 (RRTSTAMLTR…PIRVEFQESA (85 aa)) constitute a KH-like domain. Residues 476 to 499 (GRKNTMTLSQERQRKRLLKAKTKK) form a disordered region. Positions 488–499 (QRKRLLKAKTKK) are enriched in basic residues.

The protein belongs to the TRAFAC class TrmE-Era-EngA-EngB-Septin-like GTPase superfamily. EngA (Der) GTPase family. As to quaternary structure, associates with the 50S ribosomal subunit.

GTPase that plays an essential role in the late steps of ribosome biogenesis. The sequence is that of GTPase Der from Aeromonas salmonicida (strain A449).